The sequence spans 153 residues: UPF0756 membrane protein lin1603 (153 aa).

Helical transmembrane passes span 6–26 (MLFL…SLII), 54–74 (WGVT…QIGF), 80–100 (SFKS…SILA), and 117–137 (LVFG…GPVI).

This sequence belongs to the UPF0756 family.

The protein localises to the cell membrane. The sequence is that of UPF0756 membrane protein lin1603 from Listeria innocua serovar 6a (strain ATCC BAA-680 / CLIP 11262).